The sequence spans 535 residues: D-2-hydroxyglutarate dehydrogenase, mitochondrial (535 aa).

Residues 1–50 (MVLHLVPRWSASLFRASPRWKKTYSQRASAQLKWLGCPRSVYSPLACRAY) constitute a mitochondrion transit peptide. In terms of domain architecture, FAD-binding PCMH-type spans 110–289 (VRGCSKVLLR…TAVSIVCPPR (180 aa)). Lys115 bears the N6-succinyllysine mark. (R)-2-hydroxyglutarate contacts are provided by Arg400, Thr404, and Lys415. Position 400 (Arg400) interacts with (R)-lactate. (R)-malate contacts are provided by Arg400, Thr404, and Lys415. 2 residues coordinate Zn(2+): His448 and His455. Asn457 serves as a coordination point for (R)-2-hydroxyglutarate. Glu489 serves as a coordination point for Zn(2+). His490 provides a ligand contact to (R)-2-hydroxyglutarate. His490 contributes to the (R)-lactate binding site. His490 lines the (R)-malate pocket.

The protein belongs to the FAD-binding oxidoreductase/transferase type 4 family. FAD is required as a cofactor.

It localises to the mitochondrion. The enzyme catalyses (R)-2-hydroxyglutarate + A = 2-oxoglutarate + AH2. It catalyses the reaction (R)-malate + A = oxaloacetate + AH2. Activated by zinc, cobalt and manganese ions. Inhibited by EDTA. Its function is as follows. Catalyzes the oxidation of D-2-hydroxyglutarate (D-2-HG) to alpha-ketoglutarate. Also catalyzes the oxidation of other D-2-hydroxyacids, such as D-malate (D-MAL) and D-lactate (D-LAC). Exhibits high activities towards D-2-HG and D-MAL but a very weak activity towards D-LAC. This is D-2-hydroxyglutarate dehydrogenase, mitochondrial from Rattus norvegicus (Rat).